Reading from the N-terminus, the 279-residue chain is NADPH-dependent 7-cyano-7-deazaguanine reductase (279 aa).

86–88 (IES) is a substrate binding site. 88–89 (SK) contacts NADPH. Cys-187 acts as the Thioimide intermediate in catalysis. Residue Asp-194 is the Proton donor of the active site. 226–227 (HE) serves as a coordination point for substrate. 255–256 (RG) serves as a coordination point for NADPH.

It belongs to the GTP cyclohydrolase I family. QueF type 2 subfamily. Homodimer.

Its subcellular location is the cytoplasm. The enzyme catalyses 7-aminomethyl-7-carbaguanine + 2 NADP(+) = 7-cyano-7-deazaguanine + 2 NADPH + 3 H(+). The protein operates within tRNA modification; tRNA-queuosine biosynthesis. Catalyzes the NADPH-dependent reduction of 7-cyano-7-deazaguanine (preQ0) to 7-aminomethyl-7-deazaguanine (preQ1). The chain is NADPH-dependent 7-cyano-7-deazaguanine reductase from Actinobacillus pleuropneumoniae serotype 7 (strain AP76).